The following is a 418-amino-acid chain: uncharacterized protein (418 aa).

The interval 1–24 is disordered; it reads MSGTAGFITVSPGPPTEAPGGFPR.

The protein to A.pernix APE_1276 and S.solfataricus SSO2105.

This is an uncharacterized protein from Aeropyrum pernix (strain ATCC 700893 / DSM 11879 / JCM 9820 / NBRC 100138 / K1).